A 487-amino-acid chain; its full sequence is Glutamyl-tRNA(Gln) amidotransferase subunit A (487 aa).

Residues Lys77 and Ser152 each act as charge relay system in the active site. Residue Ser176 is the Acyl-ester intermediate of the active site.

This sequence belongs to the amidase family. GatA subfamily. In terms of assembly, heterotrimer of A, B and C subunits.

The enzyme catalyses L-glutamyl-tRNA(Gln) + L-glutamine + ATP + H2O = L-glutaminyl-tRNA(Gln) + L-glutamate + ADP + phosphate + H(+). Its function is as follows. Allows the formation of correctly charged Gln-tRNA(Gln) through the transamidation of misacylated Glu-tRNA(Gln) in organisms which lack glutaminyl-tRNA synthetase. The reaction takes place in the presence of glutamine and ATP through an activated gamma-phospho-Glu-tRNA(Gln). The chain is Glutamyl-tRNA(Gln) amidotransferase subunit A from Lysinibacillus sphaericus (strain C3-41).